The following is a 128-amino-acid chain: Ribonuclease P protein component (128 aa).

Belongs to the RnpA family. In terms of assembly, consists of a catalytic RNA component (M1 or rnpB) and a protein subunit.

The enzyme catalyses Endonucleolytic cleavage of RNA, removing 5'-extranucleotides from tRNA precursor.. Its function is as follows. RNaseP catalyzes the removal of the 5'-leader sequence from pre-tRNA to produce the mature 5'-terminus. It can also cleave other RNA substrates such as 4.5S RNA. The protein component plays an auxiliary but essential role in vivo by binding to the 5'-leader sequence and broadening the substrate specificity of the ribozyme. In Prochlorococcus marinus (strain MIT 9301), this protein is Ribonuclease P protein component.